The primary structure comprises 181 residues: Crossover junction endodeoxyribonuclease RuvC (181 aa).

Active-site residues include D7, E67, and D139. 3 residues coordinate Mg(2+): D7, E67, and D139.

This sequence belongs to the RuvC family. In terms of assembly, homodimer which binds Holliday junction (HJ) DNA. The HJ becomes 2-fold symmetrical on binding to RuvC with unstacked arms; it has a different conformation from HJ DNA in complex with RuvA. In the full resolvosome a probable DNA-RuvA(4)-RuvB(12)-RuvC(2) complex forms which resolves the HJ. Mg(2+) is required as a cofactor.

It is found in the cytoplasm. The catalysed reaction is Endonucleolytic cleavage at a junction such as a reciprocal single-stranded crossover between two homologous DNA duplexes (Holliday junction).. Its function is as follows. The RuvA-RuvB-RuvC complex processes Holliday junction (HJ) DNA during genetic recombination and DNA repair. Endonuclease that resolves HJ intermediates. Cleaves cruciform DNA by making single-stranded nicks across the HJ at symmetrical positions within the homologous arms, yielding a 5'-phosphate and a 3'-hydroxyl group; requires a central core of homology in the junction. The consensus cleavage sequence is 5'-(A/T)TT(C/G)-3'. Cleavage occurs on the 3'-side of the TT dinucleotide at the point of strand exchange. HJ branch migration catalyzed by RuvA-RuvB allows RuvC to scan DNA until it finds its consensus sequence, where it cleaves and resolves the cruciform DNA. The protein is Crossover junction endodeoxyribonuclease RuvC of Cupriavidus necator (strain ATCC 17699 / DSM 428 / KCTC 22496 / NCIMB 10442 / H16 / Stanier 337) (Ralstonia eutropha).